A 518-amino-acid polypeptide reads, in one-letter code: Probable protein phosphatase 2C 14 (518 aa).

Composition is skewed to low complexity over residues 1–10 (MVEAAAGRRS) and 86–105 (PQRQ…APGA). Disordered stretches follow at residues 1–31 (MVEA…QQHQ) and 86–108 (PQRQ…ADGR). In terms of domain architecture, PPM-type phosphatase spans 129–437 (VASLYTLQGK…DDCAVVCLFL (309 aa)). Positions 165 and 166 each coordinate Mn(2+). A disordered region spans residues 192 to 222 (TDEGRQTSTSSIKSNGDETGSPGNMGRDAEQ). Positions 197–213 (QTSTSSIKSNGDETGSP) are enriched in polar residues. Mn(2+)-binding residues include D382 and D428.

This sequence belongs to the PP2C family. It depends on Mg(2+) as a cofactor. Mn(2+) is required as a cofactor.

It carries out the reaction O-phospho-L-seryl-[protein] + H2O = L-seryl-[protein] + phosphate. It catalyses the reaction O-phospho-L-threonyl-[protein] + H2O = L-threonyl-[protein] + phosphate. The sequence is that of Probable protein phosphatase 2C 14 from Oryza sativa subsp. japonica (Rice).